Consider the following 1773-residue polypeptide: Plexin-2 (1773 aa).

An N-terminal signal peptide occupies residues 1-19 (MLFIESAFLVLTSLSAAEA). A Sema domain is found at 20-436 (ATPFEGGVKQ…MPYGIVMEEL (417 aa)). Residues 20 to 1130 (ATPFEGGVKQ…SDHALPSRLS (1111 aa)) lie on the Extracellular side of the membrane. A glycan (N-linked (GlcNAc...) asparagine) is linked at asparagine 65. Cystine bridges form between cysteine 83–cysteine 90, cysteine 117–cysteine 125, cysteine 239–cysteine 341, cysteine 255–cysteine 292, cysteine 310–cysteine 328, cysteine 439–cysteine 456, cysteine 445–cysteine 479, cysteine 448–cysteine 465, and cysteine 459–cysteine 471. Asparagine 241 carries an N-linked (GlcNAc...) asparagine glycan. The region spanning 438-480 (TCAHHESCTDCQVSVDPLCQWCHPTQSCTTSSRCSGPLTTQCP) is the PSI 1 domain. The N-linked (GlcNAc...) asparagine glycan is linked to asparagine 494. An intrachain disulfide couples cysteine 516 to cysteine 538. N-linked (GlcNAc...) asparagine glycosylation occurs at asparagine 566. A PSI 2 domain is found at 571–608 (DCAGYSTCSTCMSSEFGCQWCSHKCSSSCGSASAKACV). Asparagine 670 and asparagine 693 each carry an N-linked (GlcNAc...) asparagine glycan. Positions 698–739 (SCSNLAADCSSCLALSPSLSCGWCNRKCSHECHESKATAVCD) constitute a PSI 3 domain. IPT/TIG domains lie at 741–829 (PKID…FSFV), 831–916 (VSIF…FEYR), and 919–1006 (PSVN…FLMD). N-linked (GlcNAc...) asparagine glycans are attached at residues asparagine 855, asparagine 877, asparagine 975, and asparagine 1007. A helical membrane pass occupies residues 1131 to 1151 (FLILGLLLFTVITLIVMCLIF). Residues 1150-1188 (IFKRRRQEREKEYRKIQLQMENLENNVRKECKQAFAELQ) adopt a coiled-coil conformation. Residues 1152–1764 (KRRRQEREKE…LHVCLETDNH (613 aa)) are Cytoplasmic-facing.

It belongs to the plexin family. In terms of assembly, interacts with mab-20.

Its subcellular location is the cell membrane. In terms of biological role, involved as a receptor for mab-20/sema-2a in the formation or stabilization of cell-cell contacts at several stages of epithelial morphogenesis. In early embryonic development, required for proper ventral closure of the epidermis. During male tail morphogenesis, involved in precursor cell sorting and in the formation of distinct sensory rays. Involved in axon guidance of SDQL neurons during neurogenesis. This Caenorhabditis briggsae protein is Plexin-2 (plx-2).